Here is a 168-residue protein sequence, read N- to C-terminus: Small ribosomal subunit protein bS16 (168 aa).

The interval 110 to 168 is disordered; sequence LAEAEGGPSNEATQPKKKKAPAKKAASDIEATADPAGNADKSEPAAEGEDATVAGATEG.

Belongs to the bacterial ribosomal protein bS16 family.

This Mycobacterium sp. (strain JLS) protein is Small ribosomal subunit protein bS16.